Here is a 736-residue protein sequence, read N- to C-terminus: DNA topoisomerase 1 (736 aa).

One can recognise a Toprim domain in the interval 2 to 113 (KHLIIVESPA…SYPRIVFHEI (112 aa)). Mg(2+) contacts are provided by Glu8 and Asp82. A Topo IA-type catalytic domain is found at 129 to 552 (DMFKVNAQQA…DFYYPFMDKI (424 aa)). The interaction with DNA stretch occupies residues 163-168 (SAGRVQ). Residue Tyr297 is the O-(5'-phospho-DNA)-tyrosine intermediate of the active site. 4 C4-type zinc fingers span residues 572 to 598 (CPKC…YPKC), 616 to 642 (CEKC…YPEC), 663 to 689 (CPEC…YPKC), and 702 to 725 (CEKC…CIQC).

The protein belongs to the type IA topoisomerase family. As to quaternary structure, monomer. The cofactor is Mg(2+).

The enzyme catalyses ATP-independent breakage of single-stranded DNA, followed by passage and rejoining.. Its function is as follows. Releases the supercoiling and torsional tension of DNA, which is introduced during the DNA replication and transcription, by transiently cleaving and rejoining one strand of the DNA duplex. Introduces a single-strand break via transesterification at a target site in duplex DNA. The scissile phosphodiester is attacked by the catalytic tyrosine of the enzyme, resulting in the formation of a DNA-(5'-phosphotyrosyl)-enzyme intermediate and the expulsion of a 3'-OH DNA strand. The free DNA strand then undergoes passage around the unbroken strand, thus removing DNA supercoils. Finally, in the religation step, the DNA 3'-OH attacks the covalent intermediate to expel the active-site tyrosine and restore the DNA phosphodiester backbone. This chain is DNA topoisomerase 1, found in Helicobacter pylori (strain J99 / ATCC 700824) (Campylobacter pylori J99).